The sequence spans 432 residues: Alcohol acyltransferase 9 (432 aa).

Active-site proton acceptor residues include H156 and D379.

This sequence belongs to the plant acyltransferase family. In terms of tissue distribution, expressed in fruit.

It carries out the reaction 2-(methylsulfanyl)acetyl-CoA + butan-1-ol = butyl 2-(methylsulfanyl)acetate + CoA. The enzyme catalyses ethanol + acetyl-CoA = ethyl acetate + CoA. It catalyses the reaction butan-1-ol + acetyl-CoA = butyl acetate + CoA. The catalysed reaction is butan-1-ol + propanoyl-CoA = butyl propanoate + CoA. Involved in the biosynthesis of volatile esters which confer kiwifruit flavor. Alcohol acyl transferase that can use a wide range of alcohols as substrate to produce esters. Exhibits acetyl-CoA:alcohol O-acyltransferase activity. The protein is Alcohol acyltransferase 9 of Actinidia eriantha (Velvet vine).